A 468-amino-acid chain; its full sequence is 55 kDa erythrocyte membrane protein (468 aa).

A PDZ domain is found at L73–Q154. The region spanning A160–V230 is the SH3 domain. Positions R284–E453 constitute a Guanylate kinase-like domain.

It belongs to the MAGUK family.

It localises to the membrane. The protein resides in the cell projection. The protein localises to the stereocilium. Its function is as follows. May play a role in the regulation of neutrophil polarization. This Gallus gallus (Chicken) protein is 55 kDa erythrocyte membrane protein (MPP1).